We begin with the raw amino-acid sequence, 335 residues long: Methionine import ATP-binding protein MetN (335 aa).

The ABC transporter domain occupies 2–241; the sequence is IQFKDSYKHY…PQHPTTRSFV (240 aa). An ATP-binding site is contributed by 38 to 45; that stretch reads GHSGAGKS.

Belongs to the ABC transporter superfamily. Methionine importer (TC 3.A.1.24) family. In terms of assembly, the complex is composed of two ATP-binding proteins (MetN), two transmembrane proteins (MetI) and a solute-binding protein (MetQ).

It is found in the cell inner membrane. It catalyses the reaction L-methionine(out) + ATP + H2O = L-methionine(in) + ADP + phosphate + H(+). The enzyme catalyses D-methionine(out) + ATP + H2O = D-methionine(in) + ADP + phosphate + H(+). In terms of biological role, part of the ABC transporter complex MetNIQ involved in methionine import. Responsible for energy coupling to the transport system. The polypeptide is Methionine import ATP-binding protein MetN (Xylella fastidiosa (strain Temecula1 / ATCC 700964)).